We begin with the raw amino-acid sequence, 236 residues long: Pyridoxal phosphate homeostasis protein (236 aa).

K36 bears the N6-(pyridoxal phosphate)lysine mark.

It belongs to the pyridoxal phosphate-binding protein YggS/PROSC family.

Functionally, pyridoxal 5'-phosphate (PLP)-binding protein, which is involved in PLP homeostasis. The polypeptide is Pyridoxal phosphate homeostasis protein (Vibrio cholerae serotype O1 (strain ATCC 39315 / El Tor Inaba N16961)).